Consider the following 140-residue polypeptide: UPF0102 protein Ppro_1186 (140 aa).

Positions 1-27 (MKRPGDGRQESPSSTARPDNRNTGSRG) are disordered. Positions 10–25 (ESPSSTARPDNRNTGS) are enriched in polar residues.

The protein belongs to the UPF0102 family.

This is UPF0102 protein Ppro_1186 from Pelobacter propionicus (strain DSM 2379 / NBRC 103807 / OttBd1).